The primary structure comprises 388 residues: Chorismate synthase (388 aa).

Residues Arg39 and Arg45 each contribute to the NADP(+) site. Residues 130 to 132 (RSS), 251 to 252 (NA), Gly296, 311 to 315 (KPIPT), and Arg337 contribute to the FMN site.

This sequence belongs to the chorismate synthase family. In terms of assembly, homotetramer. It depends on FMNH2 as a cofactor.

It carries out the reaction 5-O-(1-carboxyvinyl)-3-phosphoshikimate = chorismate + phosphate. The protein operates within metabolic intermediate biosynthesis; chorismate biosynthesis; chorismate from D-erythrose 4-phosphate and phosphoenolpyruvate: step 7/7. Functionally, catalyzes the anti-1,4-elimination of the C-3 phosphate and the C-6 proR hydrogen from 5-enolpyruvylshikimate-3-phosphate (EPSP) to yield chorismate, which is the branch point compound that serves as the starting substrate for the three terminal pathways of aromatic amino acid biosynthesis. This reaction introduces a second double bond into the aromatic ring system. In Streptococcus pneumoniae serotype 2 (strain D39 / NCTC 7466), this protein is Chorismate synthase.